The chain runs to 604 residues: Linalool synthase Tps-5073L4, chloroplastic (604 aa).

The N-terminal 36 residues, 1 to 36, are a transit peptide targeting the chloroplast; sequence MSSMRIYVAIMKKPSVKHVDYVDKKASKPSWRVSSS. (2E)-geranyl diphosphate-binding residues include Arg-323, Asp-360, Asp-364, Arg-501, and Asp-504. Mg(2+) contacts are provided by Asp-360 and Asp-364. A DDXXD motif motif is present at residues 360–364; sequence DDVYD. Mg(2+) contacts are provided by Asp-504, Thr-508, and Glu-512.

This sequence belongs to the terpene synthase family. Tpsb subfamily. In terms of assembly, monomer. The cofactor is Mg(2+). It depends on Mn(2+) as a cofactor.

The protein resides in the plastid. The protein localises to the chloroplast. It carries out the reaction (2E)-geranyl diphosphate + H2O = linalool + diphosphate. Its pathway is secondary metabolite biosynthesis; terpenoid biosynthesis. Its function is as follows. Monoterpene synthase (mono-TPS) involved in the biosynthesis of monoterpenes natural products. Catalyzes the conversion of (2E)-geranyl diphosphate (GPP) into linalool. The polypeptide is Linalool synthase Tps-5073L4, chloroplastic (Perilla frutescens (Beefsteak mint)).